Reading from the N-terminus, the 417-residue chain is MKAEIISVGTELLLGQITDTNRPYIARALHDMGIESYHQSIVGGNAADILTTLRLAAHRSDLIILIGGLGPAVDDLTKQVVSQFINSSLIPDTEALRKLKKWHDAVDVEMADNNYRQVLFLEQGKPLKNDFGFAVGSFYQSNDGPDFLLMPGPPWEMVPMFDHYVVPLLERQYLHGQVLNSLVMRYFGIGESRLSQLISDLMISQTNPTMTTDAKKHEVTIRLTSKASSEALAENLNQKAAAKINTLVGDYFYGYGAHNSLEKVVANLLEENQQTIAMTEVFTRGLVQSTLQNALSQTETLAGGFNGMSALLDLTDDEIELSGDNGAQLVSRLAQLTQQRLGADIGLAILAETPESNGQHDYVNEKVWFGLVSHQERLLVTSQSFAKDHQDNVEDAIFVALDLIRRHLSQQNLVDRA.

It belongs to the CinA family.

This Leuconostoc citreum (strain KM20) protein is Putative competence-damage inducible protein.